The primary structure comprises 307 residues: 4-hydroxy-3-methylbut-2-enyl diphosphate reductase (307 aa).

C13 contacts [4Fe-4S] cluster. Positions 42 and 75 each coordinate (2E)-4-hydroxy-3-methylbut-2-enyl diphosphate. 2 residues coordinate dimethylallyl diphosphate: H42 and H75. The isopentenyl diphosphate site is built by H42 and H75. A [4Fe-4S] cluster-binding site is contributed by C97. H125 is a binding site for (2E)-4-hydroxy-3-methylbut-2-enyl diphosphate. Residue H125 participates in dimethylallyl diphosphate binding. An isopentenyl diphosphate-binding site is contributed by H125. E127 functions as the Proton donor in the catalytic mechanism. T165 lines the (2E)-4-hydroxy-3-methylbut-2-enyl diphosphate pocket. C195 is a [4Fe-4S] cluster binding site. Residues S223, S224, N225, and S267 each contribute to the (2E)-4-hydroxy-3-methylbut-2-enyl diphosphate site. S223, S224, N225, and S267 together coordinate dimethylallyl diphosphate. Residues S223, S224, N225, and S267 each contribute to the isopentenyl diphosphate site.

Belongs to the IspH family. Requires [4Fe-4S] cluster as cofactor.

The enzyme catalyses isopentenyl diphosphate + 2 oxidized [2Fe-2S]-[ferredoxin] + H2O = (2E)-4-hydroxy-3-methylbut-2-enyl diphosphate + 2 reduced [2Fe-2S]-[ferredoxin] + 2 H(+). The catalysed reaction is dimethylallyl diphosphate + 2 oxidized [2Fe-2S]-[ferredoxin] + H2O = (2E)-4-hydroxy-3-methylbut-2-enyl diphosphate + 2 reduced [2Fe-2S]-[ferredoxin] + 2 H(+). It functions in the pathway isoprenoid biosynthesis; dimethylallyl diphosphate biosynthesis; dimethylallyl diphosphate from (2E)-4-hydroxy-3-methylbutenyl diphosphate: step 1/1. Its pathway is isoprenoid biosynthesis; isopentenyl diphosphate biosynthesis via DXP pathway; isopentenyl diphosphate from 1-deoxy-D-xylulose 5-phosphate: step 6/6. Its function is as follows. Catalyzes the conversion of 1-hydroxy-2-methyl-2-(E)-butenyl 4-diphosphate (HMBPP) into a mixture of isopentenyl diphosphate (IPP) and dimethylallyl diphosphate (DMAPP). Acts in the terminal step of the DOXP/MEP pathway for isoprenoid precursor biosynthesis. The polypeptide is 4-hydroxy-3-methylbut-2-enyl diphosphate reductase (Chlamydia trachomatis serovar A (strain ATCC VR-571B / DSM 19440 / HAR-13)).